Consider the following 410-residue polypeptide: Cysteine desulfurase IscS (410 aa).

Residues 80-81 (AT), asparagine 160, glutamine 188, and 208-210 (SGH) contribute to the pyridoxal 5'-phosphate site. The residue at position 211 (lysine 211) is an N6-(pyridoxal phosphate)lysine. Threonine 248 lines the pyridoxal 5'-phosphate pocket. Cysteine 334 (cysteine persulfide intermediate) is an active-site residue. [2Fe-2S] cluster is bound at residue cysteine 334.

The protein belongs to the class-V pyridoxal-phosphate-dependent aminotransferase family. NifS/IscS subfamily. In terms of assembly, homodimer. Forms a heterotetramer with IscU, interacts with other sulfur acceptors. Pyridoxal 5'-phosphate is required as a cofactor.

The protein localises to the cytoplasm. The catalysed reaction is (sulfur carrier)-H + L-cysteine = (sulfur carrier)-SH + L-alanine. It participates in cofactor biosynthesis; iron-sulfur cluster biosynthesis. In terms of biological role, master enzyme that delivers sulfur to a number of partners involved in Fe-S cluster assembly, tRNA modification or cofactor biosynthesis. Catalyzes the removal of elemental sulfur atoms from cysteine to produce alanine. Functions as a sulfur delivery protein for Fe-S cluster synthesis onto IscU, an Fe-S scaffold assembly protein, as well as other S acceptor proteins. This is Cysteine desulfurase IscS from Rickettsia rickettsii (strain Iowa).